We begin with the raw amino-acid sequence, 542 residues long: CTP synthase (542 aa).

The interval 1-265 is amidoligase domain; sequence MARYVFITGG…DDEVLAAFGI (265 aa). S13 contributes to the CTP binding site. S13 is a UTP binding site. ATP contacts are provided by residues 14–19 and D71; that span reads SLGKGI. Residues D71 and E139 each coordinate Mg(2+). CTP is bound by residues 146–148, 186–191, and K222; these read DIE and KTKPTQ. Residues 186–191 and K222 contribute to the UTP site; that span reads KTKPTQ. The 251-residue stretch at 291–541 folds into the Glutamine amidotransferase type-1 domain; that stretch reads TIAIVGKYTG…IEAATEQSRL (251 aa). G353 serves as a coordination point for L-glutamine. The active-site Nucleophile; for glutamine hydrolysis is C380. L-glutamine is bound by residues 381 to 384, E404, and R469; that span reads FGMQ. Active-site residues include H514 and E516.

It belongs to the CTP synthase family. Homotetramer.

The enzyme catalyses UTP + L-glutamine + ATP + H2O = CTP + L-glutamate + ADP + phosphate + 2 H(+). It catalyses the reaction L-glutamine + H2O = L-glutamate + NH4(+). The catalysed reaction is UTP + NH4(+) + ATP = CTP + ADP + phosphate + 2 H(+). It participates in pyrimidine metabolism; CTP biosynthesis via de novo pathway; CTP from UDP: step 2/2. Its activity is regulated as follows. Allosterically activated by GTP, when glutamine is the substrate; GTP has no effect on the reaction when ammonia is the substrate. The allosteric effector GTP functions by stabilizing the protein conformation that binds the tetrahedral intermediate(s) formed during glutamine hydrolysis. Inhibited by the product CTP, via allosteric rather than competitive inhibition. In terms of biological role, catalyzes the ATP-dependent amination of UTP to CTP with either L-glutamine or ammonia as the source of nitrogen. Regulates intracellular CTP levels through interactions with the four ribonucleotide triphosphates. This is CTP synthase from Rhizobium johnstonii (strain DSM 114642 / LMG 32736 / 3841) (Rhizobium leguminosarum bv. viciae).